Here is a 200-residue protein sequence, read N- to C-terminus: Ras-related protein RABF2a (200 aa).

17 to 25 (GDVGAGKSS) contributes to the GTP binding site. An Effector region motif is present at residues 39–47 (QESTIGAAF). GTP-binding positions include 65–69 (DTAGQ), 123–126 (NKAD), and 153–154 (SA). 2 S-geranylgeranyl cysteine lipidation sites follow: cysteine 198 and cysteine 199.

The protein belongs to the small GTPase superfamily. Rab family. In terms of assembly, interacts with VPS9A. Interacts with EREX (via PX domain). Binds to VPS3. As to expression, high in stem, root, and inflorescence.

It localises to the endosome membrane. The protein localises to the prevacuolar compartment membrane. Functionally, involved in the trafficking of soluble cargo proteins from the prevacuolar compartment to the central vacuole. Involved in vacuolar transport of storage proteins with EREX as effector. Regulates membrane trafficking to protein storage vacuoles (PSVs). This is Ras-related protein RABF2a (RABF2A) from Arabidopsis thaliana (Mouse-ear cress).